We begin with the raw amino-acid sequence, 341 residues long: Protein pelota homolog (341 aa).

This sequence belongs to the eukaryotic release factor 1 family. Pelota subfamily. Monomer. The cofactor is a divalent metal cation.

The protein localises to the cytoplasm. Its function is as follows. May function in recognizing stalled ribosomes, interact with stem-loop structures in stalled mRNA molecules, and effect endonucleolytic cleavage of the mRNA. May play a role in the release non-functional ribosomes and degradation of damaged mRNAs. Has endoribonuclease activity. This chain is Protein pelota homolog, found in Metallosphaera sedula (strain ATCC 51363 / DSM 5348 / JCM 9185 / NBRC 15509 / TH2).